A 180-amino-acid chain; its full sequence is Ribulose bisphosphate carboxylase small subunit, chloroplastic 2 (180 aa).

Residues 1-56 constitute a chloroplast transit peptide; it reads MASSVLSSAAVATVSRTPAQASMVAPFTGLKSTVGFPATKKNDDITSLASNGGRVQ.

Belongs to the RuBisCO small chain family. In terms of assembly, heterohexadecamer of 8 large and 8 small subunits.

The protein localises to the plastid. Its subcellular location is the chloroplast. RuBisCO catalyzes two reactions: the carboxylation of D-ribulose 1,5-bisphosphate, the primary event in carbon dioxide fixation, as well as the oxidative fragmentation of the pentose substrate. Both reactions occur simultaneously and in competition at the same active site. Although the small subunit is not catalytic it is essential for maximal activity. This Spinacia oleracea (Spinach) protein is Ribulose bisphosphate carboxylase small subunit, chloroplastic 2.